The following is a 251-amino-acid chain: Duodenase-1 (251 aa).

The N-terminal stretch at methionine 1–alanine 17 is a signal peptide. A propeptide spanning residues glycine 18–lysine 19 is cleaved from the precursor. In terms of domain architecture, Peptidase S1 spans isoleucine 20–methionine 242. A disulfide bridge connects residues cysteine 48 and cysteine 64. Histidine 63 (charge relay system) is an active-site residue. Asparagine 70 carries an N-linked (GlcNAc...) asparagine glycan. Aspartate 107 serves as the catalytic Charge relay system. Intrachain disulfides connect cysteine 141/cysteine 207 and cysteine 172/cysteine 186. The Charge relay system role is filled by serine 201.

This sequence belongs to the peptidase S1 family. As to quaternary structure, monomer.

Its function is as follows. Protease which has both trypsin-like and chymotrypsin-like activities. Shows a preferential cleavage after Lys, Arg, Tyr, Phe, and Leu residues. This Bos taurus (Bovine) protein is Duodenase-1 (BDMD1).